Here is a 314-residue protein sequence, read N- to C-terminus: Aspartate carbamoyltransferase catalytic subunit (314 aa).

Positions 63 and 64 each coordinate carbamoyl phosphate. K91 is a binding site for L-aspartate. Carbamoyl phosphate-binding residues include R113, H143, and Q146. Residues R176 and R228 each contribute to the L-aspartate site. A269 and P270 together coordinate carbamoyl phosphate.

The protein belongs to the aspartate/ornithine carbamoyltransferase superfamily. ATCase family. Heterododecamer (2C3:3R2) of six catalytic PyrB chains organized as two trimers (C3), and six regulatory PyrI chains organized as three dimers (R2).

The catalysed reaction is carbamoyl phosphate + L-aspartate = N-carbamoyl-L-aspartate + phosphate + H(+). It participates in pyrimidine metabolism; UMP biosynthesis via de novo pathway; (S)-dihydroorotate from bicarbonate: step 2/3. In terms of biological role, catalyzes the condensation of carbamoyl phosphate and aspartate to form carbamoyl aspartate and inorganic phosphate, the committed step in the de novo pyrimidine nucleotide biosynthesis pathway. In Cutibacterium acnes (strain DSM 16379 / KPA171202) (Propionibacterium acnes), this protein is Aspartate carbamoyltransferase catalytic subunit.